We begin with the raw amino-acid sequence, 223 residues long: Ribose-5-phosphate isomerase A (223 aa).

Substrate-binding positions include 32–35, 83–86, and 96–99; these read TGST, DGAD, and KGGG. The Proton acceptor role is filled by Glu105. Lys123 contributes to the substrate binding site.

This sequence belongs to the ribose 5-phosphate isomerase family. In terms of assembly, homodimer.

The catalysed reaction is aldehydo-D-ribose 5-phosphate = D-ribulose 5-phosphate. Its pathway is carbohydrate degradation; pentose phosphate pathway; D-ribose 5-phosphate from D-ribulose 5-phosphate (non-oxidative stage): step 1/1. Catalyzes the reversible conversion of ribose-5-phosphate to ribulose 5-phosphate. The chain is Ribose-5-phosphate isomerase A from Acinetobacter baumannii (strain SDF).